Consider the following 322-residue polypeptide: Eukaryotic translation initiation factor 3 subunit I (322 aa).

5 WD repeats span residues G4–T43, G46–S85, M141–D180, D184–T223, and G281–E322.

The protein belongs to the eIF-3 subunit I family. In terms of assembly, component of the eukaryotic translation initiation factor 3 (eIF-3) complex. The eIF-3 complex interacts with pix.

The protein localises to the cytoplasm. Its function is as follows. Component of the eukaryotic translation initiation factor 3 (eIF-3) complex, which is involved in protein synthesis of a specialized repertoire of mRNAs and, together with other initiation factors, stimulates binding of mRNA and methionyl-tRNAi to the 40S ribosome. The eIF-3 complex specifically targets and initiates translation of a subset of mRNAs involved in cell proliferation. The chain is Eukaryotic translation initiation factor 3 subunit I from Drosophila willistoni (Fruit fly).